Consider the following 32-residue polypeptide: uncharacterized protein (32 aa).

This is an uncharacterized protein from Gallus gallus (Chicken).